A 404-amino-acid chain; its full sequence is Synaptic vesicle membrane protein VAT-1 homolog (404 aa).

The tract at residues 1-55 is disordered; sequence MSAEREATEAATVAAAAEARAETGAGEGAPSQPPTVEVASDPQPPPAPEASASAS. The residue at position 2 (serine 2) is an N-acetylserine. Position 2 is a phosphoserine (serine 2). The span at 9–24 shows a compositional bias: low complexity; the sequence is EAATVAAAAEARAETG. A phosphoserine mark is found at serine 31 and serine 40.

This sequence belongs to the zinc-containing alcohol dehydrogenase family. Quinone oxidoreductase subfamily. In terms of assembly, interacts with MFN1 and MFN2. Ubiquitously expressed.

The protein localises to the cytoplasm. Its subcellular location is the mitochondrion outer membrane. Functionally, plays a part in calcium-regulated keratinocyte activation in epidermal repair mechanisms. Has no effect on cell proliferation. Possesses ATPase activity. May negatively regulate mitochondrial fusion. This chain is Synaptic vesicle membrane protein VAT-1 homolog (Vat1), found in Rattus norvegicus (Rat).